A 246-amino-acid chain; its full sequence is Bis(5'-nucleosyl)-tetraphosphatase PrpE [asymmetrical] (246 aa).

This sequence belongs to the PrpE family. Requires Ni(2+) as cofactor.

The catalysed reaction is P(1),P(4)-bis(5'-guanosyl) tetraphosphate + H2O = GMP + GTP + 2 H(+). Functionally, asymmetrically hydrolyzes Ap4p to yield AMP and ATP. The sequence is that of Bis(5'-nucleosyl)-tetraphosphatase PrpE [asymmetrical] from Bacillus cereus (strain ZK / E33L).